Reading from the N-terminus, the 243-residue chain is Bidirectional sugar transporter SWEET2a (243 aa).

Residues 1 to 23 lie on the Extracellular side of the membrane; the sequence is MDWAAPALTSFVADSSYRHLCCY. The chain crosses the membrane as a helical span at residues 24–44; sequence GAGIAGNVFAFVLFISPLPTF. Residues 24 to 111 form the MtN3/slv 1 domain; the sequence is GAGIAGNVFA…AVFIAFADAK (88 aa). Over 45 to 57 the chain is Cytoplasmic; that stretch reads KRIVRNGSTEQFS. A helical transmembrane segment spans residues 58–80; sequence AMPYIYSLLNCLICMWYGLPFVS. Over 81–89 the chain is Extracellular; sequence YGVVLVATV. A helical transmembrane segment spans residues 90–110; it reads NSIGAVFQLAYTAVFIAFADA. Topologically, residues 111–117 are cytoplasmic; sequence KQRLKVS. The helical transmembrane segment at 118 to 138 threads the bilayer; sequence ALLAAVFVVFGLIVFVSLALL. Topologically, residues 139–145 are extracellular; that stretch reads DHPTRQM. The chain crosses the membrane as a helical span at residues 146 to 166; that stretch reads FVGYLSVASLIFMFASPLSII. Residues 147 to 230 enclose the MtN3/slv 2 domain; it reads VGYLSVASLI…VLYAYFRKGS (84 aa). The Cytoplasmic segment spans residues 167–179; the sequence is NLVIRTKSVEYMP. The chain crosses the membrane as a helical span at residues 180–200; that stretch reads FYLSLSMFLMSASFFGYGVLL. Residues 201 to 202 are Extracellular-facing; that stretch reads ND. The chain crosses the membrane as a helical span at residues 203–223; that stretch reads FFIYIPNGIGTILGIIQLVLY. At 224–243 the chain is on the cytoplasmic side; the sequence is AYFRKGSSEEAKLPLLVTHT.

This sequence belongs to the SWEET sugar transporter family. In terms of assembly, forms homooligomers and/or heterooligomers.

The protein localises to the cell membrane. Mediates both low-affinity uptake and efflux of sugar across the plasma membrane. This chain is Bidirectional sugar transporter SWEET2a, found in Sorghum bicolor (Sorghum).